Here is a 244-residue protein sequence, read N- to C-terminus: Large ribosomal subunit protein uL30B (244 aa).

Positions 1 to 11 are enriched in polar residues; sequence MSTEKILTPES. A disordered region spans residues 1 to 21; that stretch reads MSTEKILTPESQLKKTKAQQK.

It belongs to the universal ribosomal protein uL30 family. As to quaternary structure, component of the large ribosomal subunit (LSU). Mature yeast ribosomes consist of a small (40S) and a large (60S) subunit. The 40S small subunit contains 1 molecule of ribosomal RNA (18S rRNA) and 33 different proteins (encoded by 57 genes). The large 60S subunit contains 3 rRNA molecules (25S, 5.8S and 5S rRNA) and 46 different proteins (encoded by 81 genes).

Its subcellular location is the cytoplasm. Component of the ribosome, a large ribonucleoprotein complex responsible for the synthesis of proteins in the cell. The small ribosomal subunit (SSU) binds messenger RNAs (mRNAs) and translates the encoded message by selecting cognate aminoacyl-transfer RNA (tRNA) molecules. The large subunit (LSU) contains the ribosomal catalytic site termed the peptidyl transferase center (PTC), which catalyzes the formation of peptide bonds, thereby polymerizing the amino acids delivered by tRNAs into a polypeptide chain. The nascent polypeptides leave the ribosome through a tunnel in the LSU and interact with protein factors that function in enzymatic processing, targeting, and the membrane insertion of nascent chains at the exit of the ribosomal tunnel. In Saccharomyces cerevisiae (strain ATCC 204508 / S288c) (Baker's yeast), this protein is Large ribosomal subunit protein uL30B.